The sequence spans 122 residues: Large ribosomal subunit protein uL14 (122 aa).

This sequence belongs to the universal ribosomal protein uL14 family. In terms of assembly, part of the 50S ribosomal subunit. Forms a cluster with proteins L3 and L19. In the 70S ribosome, L14 and L19 interact and together make contacts with the 16S rRNA in bridges B5 and B8.

Functionally, binds to 23S rRNA. Forms part of two intersubunit bridges in the 70S ribosome. The chain is Large ribosomal subunit protein uL14 from Christiangramia forsetii (strain DSM 17595 / CGMCC 1.15422 / KT0803) (Gramella forsetii).